The following is a 73-amino-acid chain: Putative antitoxin VapB21 (73 aa).

This sequence belongs to the UPF0330 family.

Its function is as follows. Possibly the antitoxin component of a type II toxin-antitoxin (TA) system. Its cognate toxin is VapC21 (Potential). This is Putative antitoxin VapB21 (vapB21) from Sulfurisphaera tokodaii (strain DSM 16993 / JCM 10545 / NBRC 100140 / 7) (Sulfolobus tokodaii).